Reading from the N-terminus, the 467-residue chain is Probable citrate synthase 1, mitochondrial (467 aa).

Residues histidine 303, histidine 349, and aspartate 404 contribute to the active site.

The protein belongs to the citrate synthase family. Homodimer.

It localises to the mitochondrion matrix. The enzyme catalyses oxaloacetate + acetyl-CoA + H2O = citrate + CoA + H(+). It functions in the pathway carbohydrate metabolism; tricarboxylic acid cycle; isocitrate from oxaloacetate: step 1/2. The sequence is that of Probable citrate synthase 1, mitochondrial from Aedes aegypti (Yellowfever mosquito).